The sequence spans 95 residues: Exodeoxyribonuclease 7 small subunit (95 aa).

A disordered region spans residues 65 to 95 (ETINPAETARPAKPENAPESPRMNDLFGTES).

The protein belongs to the XseB family. In terms of assembly, heterooligomer composed of large and small subunits.

It is found in the cytoplasm. The enzyme catalyses Exonucleolytic cleavage in either 5'- to 3'- or 3'- to 5'-direction to yield nucleoside 5'-phosphates.. Bidirectionally degrades single-stranded DNA into large acid-insoluble oligonucleotides, which are then degraded further into small acid-soluble oligonucleotides. This is Exodeoxyribonuclease 7 small subunit from Chlorobaculum tepidum (strain ATCC 49652 / DSM 12025 / NBRC 103806 / TLS) (Chlorobium tepidum).